We begin with the raw amino-acid sequence, 276 residues long: MSFNLISSYLHLTKPLIIDNKSFPSRLMLGTGKYRSLRNASISIRNSSASIVTVAIRRAYNNKLKGKSSLLDGLDWKKLWILPNTAGCETVEEAIRIAILGREMARRLGQVDNNFVKLEVIADSEYLFPDPYGTLKAAEYLVSNNFTVLPYINPDPVLAKQLEEIGCSAIMPLGSPIGSGQGLQNLLNLQIIINNAKVPIIIDAGIGTASEASQAMEMGASGVLLNTAVAKATNPEYMAEAMKLGVISGRIAYLSGRISKQDKAIASSPSEGIFIK.

The Schiff-base intermediate with DXP role is filled by K117. Residues G178, 204–205 (AG), and 226–227 (NT) contribute to the 1-deoxy-D-xylulose 5-phosphate site.

This sequence belongs to the ThiG family. In terms of assembly, homotetramer. Forms heterodimers with either ThiH or ThiS.

The protein localises to the plastid. Its subcellular location is the chloroplast. It carries out the reaction [ThiS sulfur-carrier protein]-C-terminal-Gly-aminoethanethioate + 2-iminoacetate + 1-deoxy-D-xylulose 5-phosphate = [ThiS sulfur-carrier protein]-C-terminal Gly-Gly + 2-[(2R,5Z)-2-carboxy-4-methylthiazol-5(2H)-ylidene]ethyl phosphate + 2 H2O + H(+). Its pathway is cofactor biosynthesis; thiamine diphosphate biosynthesis. Functionally, catalyzes the rearrangement of 1-deoxy-D-xylulose 5-phosphate (DXP) to produce the thiazole phosphate moiety of thiamine. Sulfur is provided by the thiocarboxylate moiety of the carrier protein ThiS. In vitro, sulfur can be provided by H(2)S. This chain is Thiazole synthase, found in Gracilaria tenuistipitata var. liui (Red alga).